The following is a 196-amino-acid chain: Protein GrpE (196 aa).

Positions methionine 1–aspartate 41 are disordered.

The protein belongs to the GrpE family. Homodimer.

It localises to the cytoplasm. Functionally, participates actively in the response to hyperosmotic and heat shock by preventing the aggregation of stress-denatured proteins, in association with DnaK and GrpE. It is the nucleotide exchange factor for DnaK and may function as a thermosensor. Unfolded proteins bind initially to DnaJ; upon interaction with the DnaJ-bound protein, DnaK hydrolyzes its bound ATP, resulting in the formation of a stable complex. GrpE releases ADP from DnaK; ATP binding to DnaK triggers the release of the substrate protein, thus completing the reaction cycle. Several rounds of ATP-dependent interactions between DnaJ, DnaK and GrpE are required for fully efficient folding. In Klebsiella pneumoniae subsp. pneumoniae (strain ATCC 700721 / MGH 78578), this protein is Protein GrpE.